We begin with the raw amino-acid sequence, 124 residues long: Small ribosomal subunit protein uS12 (124 aa).

D89 bears the 3-methylthioaspartic acid mark. A disordered region spans residues 105–124 (QGVKNRKQARSRYGAKKEKS). The segment covering 108–118 (KNRKQARSRYG) has biased composition (basic residues).

It belongs to the universal ribosomal protein uS12 family. As to quaternary structure, part of the 30S ribosomal subunit. Contacts proteins S8 and S17. May interact with IF1 in the 30S initiation complex.

In terms of biological role, with S4 and S5 plays an important role in translational accuracy. Functionally, interacts with and stabilizes bases of the 16S rRNA that are involved in tRNA selection in the A site and with the mRNA backbone. Located at the interface of the 30S and 50S subunits, it traverses the body of the 30S subunit contacting proteins on the other side and probably holding the rRNA structure together. The combined cluster of proteins S8, S12 and S17 appears to hold together the shoulder and platform of the 30S subunit. The protein is Small ribosomal subunit protein uS12 of Mycobacterium leprae (strain Br4923).